We begin with the raw amino-acid sequence, 375 residues long: Alcohol dehydrogenase 1 (375 aa).

An N-acetylserine modification is found at serine 1. The Zn(2+) site is built by cysteine 46, histidine 67, cysteine 97, cysteine 100, cysteine 103, cysteine 111, and cysteine 175. NAD(+) contacts are provided by residues 200 to 205 (GLGGVG), aspartate 224, lysine 229, 293 to 295 (VGV), and arginine 370.

This sequence belongs to the zinc-containing alcohol dehydrogenase family. Class-I subfamily. In terms of assembly, homodimer. Zn(2+) serves as cofactor.

The protein resides in the cytoplasm. It carries out the reaction a primary alcohol + NAD(+) = an aldehyde + NADH + H(+). The enzyme catalyses a secondary alcohol + NAD(+) = a ketone + NADH + H(+). This Coturnix japonica (Japanese quail) protein is Alcohol dehydrogenase 1 (ADH1).